Consider the following 38-residue polypeptide: Cytochrome b559 subunit beta (38 aa).

A helical transmembrane segment spans residues 13 to 29 (WLAVHALAVPTVFFLGS). Histidine 17 lines the heme pocket.

This sequence belongs to the PsbE/PsbF family. In terms of assembly, heterodimer of an alpha subunit and a beta subunit. PSII is composed of 1 copy each of membrane proteins PsbA, PsbB, PsbC, PsbD, PsbE, PsbF, PsbH, PsbI, PsbJ, PsbK, PsbL, PsbM, PsbT, PsbX, PsbY, PsbZ, Psb30/Ycf12, at least 3 peripheral proteins of the oxygen-evolving complex and a large number of cofactors. It forms dimeric complexes. Heme b is required as a cofactor.

The protein resides in the plastid. It localises to the chloroplast thylakoid membrane. Its function is as follows. This b-type cytochrome is tightly associated with the reaction center of photosystem II (PSII). PSII is a light-driven water:plastoquinone oxidoreductase that uses light energy to abstract electrons from H(2)O, generating O(2) and a proton gradient subsequently used for ATP formation. It consists of a core antenna complex that captures photons, and an electron transfer chain that converts photonic excitation into a charge separation. This is Cytochrome b559 subunit beta from Ostreococcus tauri.